Here is a 147-residue protein sequence, read N- to C-terminus: Protein Turandot Z (147 aa).

The signal sequence occupies residues 1–23 (MYFAIRLSFVLAVLICLTGNGSA).

This sequence belongs to the Turandot family.

Its subcellular location is the secreted. Functionally, a humoral factor that may play a role in stress tolerance. This Drosophila melanogaster (Fruit fly) protein is Protein Turandot Z.